A 239-amino-acid polypeptide reads, in one-letter code: MICOS complex subunit mic25a (239 aa).

A lipid anchor (N-myristoyl glycine) is attached at Gly-2. 2 disordered regions span residues 27-88 (VKLS…KKRY) and 113-133 (DISRAVQRERAQTRQESERAK). Polar residues predominate over residues 50 to 78 (NKENQGHQTRTPSTSDAQAPKTQAKTTFP). The segment covering 79–88 (DSKEELKKRY) has biased composition (basic and acidic residues). Residues 79 to 166 (DSKEELKKRY…ITQLEKKNEE (88 aa)) are a coiled coil. Residues 192–234 (EPVCLNLQAQILNCYRENREQTLQCSDLAKEYMQCINAAKKNL) form the CHCH domain. 2 short sequence motifs (cx9C motif) span residues 195-205 (CLNLQAQILNC) and 216-226 (CSDLAKEYMQC). Intrachain disulfides connect Cys-195/Cys-226 and Cys-205/Cys-216.

The protein belongs to the MICOS complex subunit Mic19 family. Metazoan Mic25 subfamily. In terms of assembly, component of the mitochondrial contact site and cristae organizing system (MICOS) complex (also known as MINOS or MitOS complex).

The protein localises to the mitochondrion inner membrane. Component of the MICOS complex, a large protein complex of the mitochondrial inner membrane that plays crucial roles in the maintenance of crista junctions, inner membrane architecture, and formation of contact sites to the outer membrane. The sequence is that of MICOS complex subunit mic25a (chchd6a) from Danio rerio (Zebrafish).